A 158-amino-acid polypeptide reads, in one-letter code: MSWTTPKKAILLAASAEGSTKLNAFDNALLKMGIGNVNLVKLSSVIPAYIEWIDELPKNIPVGMLLPTVYAHIESDEPGSTITAALGVGISEGNEGGLIYEYSGYCTKEEAEKMVHKMVEEGFKVRGWKLKEFKAAVAEITVKDRPVAAIAAVVMLPY.

Ser44 carries the post-translational modification Pyruvic acid (Ser).

Belongs to the PdaD family. Pyruvate is required as a cofactor.

It carries out the reaction L-arginine + H(+) = agmatine + CO2. The sequence is that of Pyruvoyl-dependent arginine decarboxylase from Thermococcus sibiricus (strain DSM 12597 / MM 739).